Consider the following 366-residue polypeptide: Ferrochelatase (366 aa).

Fe cation contacts are provided by His210 and Glu293.

The protein belongs to the ferrochelatase family.

The protein localises to the cytoplasm. The catalysed reaction is heme b + 2 H(+) = protoporphyrin IX + Fe(2+). Its pathway is porphyrin-containing compound metabolism; protoheme biosynthesis; protoheme from protoporphyrin-IX: step 1/1. Catalyzes the ferrous insertion into protoporphyrin IX. The chain is Ferrochelatase from Leptospira borgpetersenii serovar Hardjo-bovis (strain JB197).